The primary structure comprises 103 residues: Pyrimidine/purine nucleoside phosphorylase (103 aa).

The protein belongs to the nucleoside phosphorylase PpnP family.

It catalyses the reaction a purine D-ribonucleoside + phosphate = a purine nucleobase + alpha-D-ribose 1-phosphate. The catalysed reaction is adenosine + phosphate = alpha-D-ribose 1-phosphate + adenine. The enzyme catalyses cytidine + phosphate = cytosine + alpha-D-ribose 1-phosphate. It carries out the reaction guanosine + phosphate = alpha-D-ribose 1-phosphate + guanine. It catalyses the reaction inosine + phosphate = alpha-D-ribose 1-phosphate + hypoxanthine. The catalysed reaction is thymidine + phosphate = 2-deoxy-alpha-D-ribose 1-phosphate + thymine. The enzyme catalyses uridine + phosphate = alpha-D-ribose 1-phosphate + uracil. It carries out the reaction xanthosine + phosphate = alpha-D-ribose 1-phosphate + xanthine. In terms of biological role, catalyzes the phosphorolysis of diverse nucleosides, yielding D-ribose 1-phosphate and the respective free bases. Can use uridine, adenosine, guanosine, cytidine, thymidine, inosine and xanthosine as substrates. Also catalyzes the reverse reactions. The sequence is that of Pyrimidine/purine nucleoside phosphorylase from Geobacter sp. (strain M21).